The chain runs to 190 residues: Elongation factor P-like protein (190 aa).

The protein belongs to the elongation factor P family.

The protein is Elongation factor P-like protein of Pectobacterium carotovorum subsp. carotovorum (strain PC1).